The primary structure comprises 65 residues: Hirudin-3A (65 aa).

An interaction with thrombin active site region spans residues 1–3 (VVY). 3 cysteine pairs are disulfide-bonded: cysteine 6–cysteine 14, cysteine 16–cysteine 28, and cysteine 22–cysteine 39. A disordered region spans residues 39–65 (CVTGEGTPKPQSHNDGDFEEIPEEYLQ). Threonine 45 is a glycosylation site (O-linked (GalNAc...) threonine). The interaction with fibrinogen-binding exosite of thrombin stretch occupies residues 55-65 (DFEEIPEEYLQ). Residues 55–65 (DFEEIPEEYLQ) are compositionally biased toward acidic residues. Sulfotyrosine is present on tyrosine 63.

Belongs to the protease inhibitor I14 (hirudin) family.

It is found in the secreted. Functionally, hirudin is a potent thrombin-specific protease inhibitor. It forms a stable non-covalent complex with alpha-thrombin, thereby abolishing its ability to cleave fibrinogen. The polypeptide is Hirudin-3A (Hirudo medicinalis (Medicinal leech)).